The sequence spans 275 residues: Large ribosomal subunit protein uL2c (275 aa).

The disordered stretch occupies residues 224-275 (AMNPVDHPHGGGEGRTPIGRKKPVTPWGYSALGKKSRKRNRYSDASILRRRE).

The protein belongs to the universal ribosomal protein uL2 family. In terms of assembly, part of the 50S ribosomal subunit.

The protein resides in the plastid. It is found in the chloroplast. The chain is Large ribosomal subunit protein uL2c (rpl2) from Picea abies (Norway spruce).